The primary structure comprises 315 residues: D-alanine--D-alanine ligase B (315 aa).

The ATP-grasp domain maps to 109-309 (KKVAAAAGVV…FAELLSWMVE (201 aa)). An ATP-binding site is contributed by 135–190 (PMKPPYVVKPVREGSSFGVVIVKEDQPHPPQVIGSADWKYGDEVMVEGYIAGRELT). Mg(2+)-binding residues include Asp-259, Glu-276, and Asn-278.

This sequence belongs to the D-alanine--D-alanine ligase family. Requires Mg(2+) as cofactor. Mn(2+) is required as a cofactor.

The protein localises to the cytoplasm. The catalysed reaction is 2 D-alanine + ATP = D-alanyl-D-alanine + ADP + phosphate + H(+). The protein operates within cell wall biogenesis; peptidoglycan biosynthesis. In terms of biological role, cell wall formation. This chain is D-alanine--D-alanine ligase B, found in Brucella melitensis biotype 1 (strain ATCC 23456 / CCUG 17765 / NCTC 10094 / 16M).